The following is a 214-amino-acid chain: Scytalone dehydratase-like protein mdpB (214 aa).

The substrate site is built by Tyr-40 and Tyr-60. Active-site residues include His-95 and His-120.

It belongs to the scytalone dehydratase family.

It functions in the pathway secondary metabolite biosynthesis. In terms of biological role, scytalone dehydratase-like protein; part of the gene cluster that mediates the biosynthesis of monodictyphenone, a prenyl xanthone derivative. The pathway begins with the synthesis of atrochrysone thioester by the polyketide synthase (PKS) mdpG. The atrochrysone carboxyl ACP thioesterase mdpF then breaks the thioester bond and releases the atrochrysone carboxylic acid from mdpG. The atrochrysone carboxylic acid is then converted to atrochrysone which is further transformed into emodin anthrone. The next step is performed by the anthrone oxygenase mdpH that catalyzes the oxidation of emodinanthrone to emodin. Emodin is further modified to yield monodictyphenone via several steps involving mdpB, mdpC mdpJ, mdpK and mdpL. These enzymes with xptA, xptB and xptC are also proposed to be involved in the synthesis of shamixanthone from emodin. Especially, direct reduction of emodin by the short chain dehydrogenase mdpC followed by dehydration catalyzed by the scytalone dehydratase-like protein mdpB gives loss of oxygen and formation of chrysophanol intermediate in two simple steps. The sequence is that of Scytalone dehydratase-like protein mdpB from Emericella nidulans (strain FGSC A4 / ATCC 38163 / CBS 112.46 / NRRL 194 / M139) (Aspergillus nidulans).